The following is a 380-amino-acid chain: Cystathionine gamma-synthase (380 aa).

N6-(pyridoxal phosphate)lysine is present on Lys-195.

Belongs to the trans-sulfuration enzymes family. Homotetramer. Pyridoxal 5'-phosphate serves as cofactor.

Its subcellular location is the cytoplasm. It carries out the reaction O-succinyl-L-homoserine + L-cysteine = L,L-cystathionine + succinate + H(+). Functionally, catalyzes the formation of L-cystathionine from O-succinyl-L-homoserine (OSHS) and L-cysteine, via a gamma-replacement reaction. In the absence of thiol, catalyzes gamma-elimination to form 2-oxobutanoate, succinate and ammonia. The chain is Cystathionine gamma-synthase (metB) from Helicobacter pylori (strain J99 / ATCC 700824) (Campylobacter pylori J99).